A 305-amino-acid polypeptide reads, in one-letter code: Glutaminase (305 aa).

Substrate-binding residues include Ser-61, Asn-113, Glu-158, Asn-165, Tyr-189, Tyr-241, and Val-259.

This sequence belongs to the glutaminase family. In terms of assembly, homotetramer.

It carries out the reaction L-glutamine + H2O = L-glutamate + NH4(+). This chain is Glutaminase, found in Alkaliphilus metalliredigens (strain QYMF).